Consider the following 141-residue polypeptide: Hemoglobin subunit zeta (141 aa).

Residue Ser1 is modified to N-acetylserine. In terms of domain architecture, Globin spans 1–141 (SLTKAERTII…VSGVLTEKYR (141 aa)). Thr28 bears the Phosphothreonine mark. The residue at position 52 (Ser52) is a Phosphoserine. His58 is a heme b binding site. Residue Ser72 is modified to Phosphoserine. His87 is a heme b binding site.

Belongs to the globin family. In terms of assembly, heterotetramer of two zeta chains and two epsilon chains.

Functionally, the zeta chain is an alpha-type chain of mammalian embryonic hemoglobin. The protein is Hemoglobin subunit zeta of Sus scrofa (Pig).